Consider the following 317-residue polypeptide: Acetyl-coenzyme A carboxylase carboxyl transferase subunit alpha (317 aa).

Positions 40–293 (LEGRVRDAMM…GTVIADALKE (254 aa)) constitute a CoA carboxyltransferase C-terminal domain.

This sequence belongs to the AccA family. As to quaternary structure, acetyl-CoA carboxylase is a heterohexamer composed of biotin carboxyl carrier protein (AccB), biotin carboxylase (AccC) and two subunits each of ACCase subunit alpha (AccA) and ACCase subunit beta (AccD).

The protein localises to the cytoplasm. The enzyme catalyses N(6)-carboxybiotinyl-L-lysyl-[protein] + acetyl-CoA = N(6)-biotinyl-L-lysyl-[protein] + malonyl-CoA. It participates in lipid metabolism; malonyl-CoA biosynthesis; malonyl-CoA from acetyl-CoA: step 1/1. In terms of biological role, component of the acetyl coenzyme A carboxylase (ACC) complex. First, biotin carboxylase catalyzes the carboxylation of biotin on its carrier protein (BCCP) and then the CO(2) group is transferred by the carboxyltransferase to acetyl-CoA to form malonyl-CoA. This chain is Acetyl-coenzyme A carboxylase carboxyl transferase subunit alpha, found in Sinorhizobium fredii (strain NBRC 101917 / NGR234).